A 165-amino-acid polypeptide reads, in one-letter code: Protein E6 (165 aa).

Zinc fingers lie at residues 52–88 (CNFC…CRVC) and 125–161 (CYTC…CRLC).

The protein belongs to the papillomaviridae E6 protein family. Forms homodimers. Interacts with ubiquitin-protein ligase UBE3A/E6-AP; this interaction stimulates UBE3A ubiquitin activity. Interacts with host BAK1.

Its subcellular location is the host cytoplasm. The protein resides in the host nucleus. Its function is as follows. Plays a major role in the induction and maintenance of cellular transformation. E6 associates with host UBE3A/E6-AP ubiquitin-protein ligase and modulates its activity. Protects host keratinocytes from apoptosis by mediating the degradation of host BAK1. May also inhibit host immune response. This Homo sapiens (Human) protein is Protein E6.